Reading from the N-terminus, the 413-residue chain is Putative F-box/kelch-repeat protein At4g22430 (413 aa).

Residues 5 to 54 (NNTITDVLEGIVTEILVRLPLRSISRFKSVSQTWKSAIESVYFRRLFVSL) form the F-box domain. The stretch at 168 to 210 (NMFLNKGEMYMPLYVYSSETGFWIHKEVVCPVRLPNFYDPISL) is one Kelch repeat.

The chain is Putative F-box/kelch-repeat protein At4g22430 from Arabidopsis thaliana (Mouse-ear cress).